Consider the following 680-residue polypeptide: Pescadillo homolog (680 aa).

Positions 315-336 (GEDEKPKAITNGEGESETPTDA) are disordered. In terms of domain architecture, BRCT spans 359–471 (DPSQLFANCT…ELKEPNQYAP (113 aa)). The disordered stretch occupies residues 494 to 680 (VPLEEQQTEA…ERKMAKGKAT (187 aa)). Composition is skewed to acidic residues over residues 511 to 530 (DVEDEEEADGAEADEDDDEA), 543 to 556 (GSDDDDDEEDEEAD), and 565 to 576 (AEVDDASEDDEQ). 3 stretches are compositionally biased toward basic and acidic residues: residues 597-610 (KASEADKQAADPKS), 617-635 (RKELQRKAKEEAEDLERAK), and 654-664 (NKKDAESEKLR). The stretch at 609 to 680 (KSKAKQQKRK…ERKMAKGKAT (72 aa)) forms a coiled coil. Basic residues predominate over residues 665-680 (EKRRRIERKMAKGKAT).

The protein belongs to the pescadillo family. In terms of assembly, component of the NOP7 complex, composed of ERB1, NOP7 and YTM1. The complex is held together by ERB1, which interacts with NOP7 via its N-terminal domain and with YTM1 via a high-affinity interaction between the seven-bladed beta-propeller domains of the 2 proteins. The NOP7 complex associates with the 66S pre-ribosome.

It localises to the nucleus. The protein localises to the nucleolus. It is found in the nucleoplasm. Component of the NOP7 complex, which is required for maturation of the 25S and 5.8S ribosomal RNAs and formation of the 60S ribosome. The protein is Pescadillo homolog of Pyricularia oryzae (strain 70-15 / ATCC MYA-4617 / FGSC 8958) (Rice blast fungus).